Reading from the N-terminus, the 148-residue chain is Wound-induced proteinase inhibitor 2 (148 aa).

Residues 1–25 form the signal peptide; the sequence is MAVHKEVNFVAYLLIVLGMFLYVDA. The 1; trypsin-inhibitory repeat unit spans residues 26-81; the sequence is KACTRECGNLGFGICPRSEGSPLNPICINCCSGYKGCNYYNSFGKFICEGESDPKR. Disulfide bonds link cysteine 28–cysteine 116, cysteine 32–cysteine 112, cysteine 40–cysteine 122, cysteine 52–cysteine 89, cysteine 55–cysteine 73, cysteine 56–cysteine 85, cysteine 62–cysteine 98, and cysteine 115–cysteine 133. The 2; chymotrypsin-inhibitory repeat unit spans residues 83-141; the sequence is NACTFNCDPNIAYSRCPRSQGKSLIYPTGCTTCCTGYKGCYYFGKDGKFVCEGESDEPK.

Belongs to the protease inhibitor I20 (potato type II proteinase inhibitor) family.

It is found in the secreted. Its function is as follows. Potent inhibitor of both trypsin and chymotrypsin. The polypeptide is Wound-induced proteinase inhibitor 2 (Solanum lycopersicum (Tomato)).